The chain runs to 123 residues: Small ribosomal subunit protein uS12 (123 aa).

At D89 the chain carries 3-methylthioaspartic acid.

This sequence belongs to the universal ribosomal protein uS12 family. Part of the 30S ribosomal subunit. Contacts proteins S8 and S17. May interact with IF1 in the 30S initiation complex.

Functionally, with S4 and S5 plays an important role in translational accuracy. Interacts with and stabilizes bases of the 16S rRNA that are involved in tRNA selection in the A site and with the mRNA backbone. Located at the interface of the 30S and 50S subunits, it traverses the body of the 30S subunit contacting proteins on the other side and probably holding the rRNA structure together. The combined cluster of proteins S8, S12 and S17 appears to hold together the shoulder and platform of the 30S subunit. In Caulobacter vibrioides (strain ATCC 19089 / CIP 103742 / CB 15) (Caulobacter crescentus), this protein is Small ribosomal subunit protein uS12.